The primary structure comprises 343 residues: L-threonine 3-dehydrogenase (343 aa).

Cys-40 lines the Zn(2+) pocket. Active-site charge relay system residues include Thr-42 and His-45. The Zn(2+) site is built by His-65, Glu-66, Cys-95, Cys-98, Cys-101, and Cys-109. NAD(+) is bound by residues Ile-177, Asp-197, Arg-202, 264 to 266 (LGI), and 288 to 289 (IY).

It belongs to the zinc-containing alcohol dehydrogenase family. As to quaternary structure, homotetramer. Requires Zn(2+) as cofactor.

Its subcellular location is the cytoplasm. The catalysed reaction is L-threonine + NAD(+) = (2S)-2-amino-3-oxobutanoate + NADH + H(+). It functions in the pathway amino-acid degradation; L-threonine degradation via oxydo-reductase pathway; glycine from L-threonine: step 1/2. Its function is as follows. Catalyzes the NAD(+)-dependent oxidation of L-threonine to 2-amino-3-ketobutyrate. This chain is L-threonine 3-dehydrogenase, found in Aliivibrio salmonicida (strain LFI1238) (Vibrio salmonicida (strain LFI1238)).